The primary structure comprises 209 residues: Protein GET1 (209 aa).

Over 1–3 (MSL) the chain is Lumenal. A helical membrane pass occupies residues 4–23 (LLVIFLLELVVQLVNTIGAK). At 24-110 (TINNLLWRFY…SFSRKLTIYR (87 aa)) the chain is on the cytoplasmic side. A coiled-coil region spans residues 74–101 (WARLQRKHDKLMDELEKKKSQLDAHRTS). Residues 111 to 131 (WILTRGMQWFLCFWFSSQPMF) form a helical membrane-spanning segment. Residues 132–155 (WLPYGWFPYWVEWLVSFPNAPMGS) lie on the Lumenal side of the membrane. A helical membrane pass occupies residues 156–172 (VSIVVWQSACSGVLALV). At 173-209 (IEAVMAVVRYTGGTGMQKQRQPVPAAGGAPGTSKKDL) the chain is on the cytoplasmic side. Residues 188 to 209 (MQKQRQPVPAAGGAPGTSKKDL) are disordered.

The protein belongs to the WRB/GET1 family. In terms of assembly, interacts with GET3.

The protein localises to the endoplasmic reticulum membrane. In terms of biological role, required for the post-translational delivery of tail-anchored (TA) proteins to the endoplasmic reticulum. Acts as a membrane receptor for soluble GET3, which recognizes and selectively binds the transmembrane domain of TA proteins in the cytosol. The polypeptide is Protein GET1 (Chaetomium thermophilum (strain DSM 1495 / CBS 144.50 / IMI 039719) (Thermochaetoides thermophila)).